Here is a 102-residue protein sequence, read N- to C-terminus: Small ribosomal subunit protein uS10 (102 aa).

Belongs to the universal ribosomal protein uS10 family. As to quaternary structure, part of the 30S ribosomal subunit.

Its function is as follows. Involved in the binding of tRNA to the ribosomes. The protein is Small ribosomal subunit protein uS10 of Bacillus thuringiensis (strain Al Hakam).